The sequence spans 798 residues: Phenylalanine--tRNA ligase beta subunit (798 aa).

The tRNA-binding domain occupies 39 to 148; the sequence is GKDLDNVVIG…EDAPIGTEYR (110 aa). Residues 401-477 form the B5 domain; that stretch reads PQRAEISLNL…RMYGFDNIEA (77 aa). Residues Asp455, Asp461, Glu464, and Glu465 each coordinate Mg(2+). An FDX-ACB domain is found at 705-797; that stretch reads SKYPEVLRDL…IKDKYNGEIR (93 aa).

Belongs to the phenylalanyl-tRNA synthetase beta subunit family. Type 1 subfamily. Tetramer of two alpha and two beta subunits. It depends on Mg(2+) as a cofactor.

It is found in the cytoplasm. The catalysed reaction is tRNA(Phe) + L-phenylalanine + ATP = L-phenylalanyl-tRNA(Phe) + AMP + diphosphate + H(+). This chain is Phenylalanine--tRNA ligase beta subunit, found in Fusobacterium nucleatum subsp. nucleatum (strain ATCC 25586 / DSM 15643 / BCRC 10681 / CIP 101130 / JCM 8532 / KCTC 2640 / LMG 13131 / VPI 4355).